The chain runs to 90 residues: Secretory calcium-binding phosphoprotein proline-glutamine-rich 1 (90 aa).

The first 15 residues, 1-15, serve as a signal peptide directing secretion; sequence MQLFLLAALLSAAAA.

In terms of tissue distribution, expressed in enamel organ.

It localises to the secreted. In terms of biological role, tooth-associated epithelia protein that may participate in structuring the basal lamina at cell-tooth interface. The chain is Secretory calcium-binding phosphoprotein proline-glutamine-rich 1 from Mus musculus (Mouse).